We begin with the raw amino-acid sequence, 294 residues long: 4-hydroxy-tetrahydrodipicolinate synthase (294 aa).

Residue Thr-47 participates in pyruvate binding. Tyr-135 acts as the Proton donor/acceptor in catalysis. Catalysis depends on Lys-163, which acts as the Schiff-base intermediate with substrate. Pyruvate is bound at residue Ile-205.

It belongs to the DapA family. Homotetramer; dimer of dimers.

It localises to the cytoplasm. It carries out the reaction L-aspartate 4-semialdehyde + pyruvate = (2S,4S)-4-hydroxy-2,3,4,5-tetrahydrodipicolinate + H2O + H(+). It participates in amino-acid biosynthesis; L-lysine biosynthesis via DAP pathway; (S)-tetrahydrodipicolinate from L-aspartate: step 3/4. Functionally, catalyzes the condensation of (S)-aspartate-beta-semialdehyde [(S)-ASA] and pyruvate to 4-hydroxy-tetrahydrodipicolinate (HTPA). The protein is 4-hydroxy-tetrahydrodipicolinate synthase of Rickettsia prowazekii (strain Madrid E).